A 470-amino-acid polypeptide reads, in one-letter code: Glutamate--tRNA ligase (470 aa).

The short motif at 15–25 (PSPTGFLHIGG) is the 'HIGH' region element. The 'KMSKS' region signature appears at 240–244 (KLSKR). ATP is bound at residue Lys243.

The protein belongs to the class-I aminoacyl-tRNA synthetase family. Glutamate--tRNA ligase type 1 subfamily. In terms of assembly, monomer.

Its subcellular location is the cytoplasm. It carries out the reaction tRNA(Glu) + L-glutamate + ATP = L-glutamyl-tRNA(Glu) + AMP + diphosphate. Its function is as follows. Catalyzes the attachment of glutamate to tRNA(Glu) in a two-step reaction: glutamate is first activated by ATP to form Glu-AMP and then transferred to the acceptor end of tRNA(Glu). The chain is Glutamate--tRNA ligase from Caulobacter vibrioides (strain ATCC 19089 / CIP 103742 / CB 15) (Caulobacter crescentus).